The following is a 263-amino-acid chain: Lens fiber major intrinsic protein (263 aa).

Residues 1 to 12 lie on the Cytoplasmic side of the membrane; sequence MWELRSASFWRA. The helical transmembrane segment at 13–30 threads the bilayer; sequence IFAEFFATLFYVFFGLGA. Residues 31 to 40 lie on the Extracellular side of the membrane; the sequence is SLRWAPGPLH. A helical membrane pass occupies residues 41 to 59; sequence VLQVALAFGLALATLVQAV. The Cytoplasmic portion of the chain corresponds to 60–63; it reads GHIS. The segment at residues 64–76 is an intramembrane region (discontinuously helical); sequence GAHVNPAVTFAFL. An NPA 1 motif is present at residues 68–70; that stretch reads NPA. Over 77–85 the chain is Cytoplasmic; the sequence is VGSQMSLLR. A helical transmembrane segment spans residues 86-106; that stretch reads AICYVVAQLLGAVAGAAVLYS. Residues 107 to 126 lie on the Extracellular side of the membrane; the sequence is VTPPAVRGNLALNTLHPGVS. Residues 127-147 traverse the membrane as a helical segment; that stretch reads VGQATIVEIFLTLQFVLCIFA. The Cytoplasmic portion of the chain corresponds to 148–157; it reads TYDERRNGRL. Residues 158–175 form a helical membrane-spanning segment; it reads GSVALAVGFSLTLGHLFG. At 176–177 the chain is on the extracellular side; the sequence is MY. Positions 178–193 form an intramembrane region, discontinuously helical; the sequence is YTGAGMNPARSFAPAI. The NPA 2 signature appears at 184 to 186; that stretch reads NPA. Topologically, residues 194–200 are extracellular; sequence LTRNFTN. Residues 201-218 traverse the membrane as a helical segment; that stretch reads HWVYWVGPVIGAGLGSLL. Topologically, residues 219–263 are cytoplasmic; the sequence is YDFLLFPRLKSVSERLSILKGTRPSESNGQPEVTGEPVELKTQAL. An interaction with CALM region spans residues 227–237; it reads LKSVSERLSIL. Phosphoserine occurs at positions 235, 243, and 245. The tract at residues 240–263 is disordered; that stretch reads TRPSESNGQPEVTGEPVELKTQAL.

It belongs to the MIP/aquaporin (TC 1.A.8) family. In terms of assembly, homotetramer; each monomer provides an independent water pore. Two homotetramers on opposing membranes can dimerize, forming a cell-cell junction. Interacts with CALM; the calcium-calmodulin/CALM complex interacts with the cytoplasmic domains of two aquaporins, leading to channel closure. Interacts with BFSP1 (via C-terminus); prevents calcium-dependent inhibition of the water channel activity. Subject to partial proteolytic cleavage in the eye lens core. Partial proteolysis promotes interactions between tetramers from adjoining membranes. Post-translationally, fatty acylated at Met-1 and Lys-238. The acyl modifications, in decreasing order of ion abundance, are: oleoyl (C18:1) &gt; palmitoyl (C16:0) &gt; stearoyl (C18:0) &gt; eicosenoyl (C20:1) &gt; dihomo-gamma-linolenoyl (C20:3) &gt; palmitoleoyl (C16:1) &gt; eicosadienoyl (C20:2). In terms of tissue distribution, detected in eye lens (at protein level).

It is found in the cell membrane. It localises to the cell junction. The catalysed reaction is H2O(in) = H2O(out). Its activity is regulated as follows. The water channel activity is inhibited by calcium through calmodulin/CALM. In terms of biological role, aquaporins form homotetrameric transmembrane channels, with each monomer independently mediating water transport across the plasma membrane along its osmotic gradient. Specifically expressed in lens fiber cells, this aquaporin is crucial for maintaining lens water homeostasis and transparency. Beyond water permeability, it also acts as a cell-to-cell adhesion molecule, forming thin junctions between lens fiber cells that are essential for maintaining the ordered structure and transparency of the lens. The polypeptide is Lens fiber major intrinsic protein (Ovis aries (Sheep)).